The primary structure comprises 176 residues: Ribonuclease mitogillin (176 aa).

Residues 1–27 (MVAIKNLFLLAATAVSVLAAPSPLDAR) form the signal peptide. Disulfide bonds link Cys-32–Cys-174 and Cys-102–Cys-158. His-76 is a catalytic residue. Residue Glu-122 is the Proton acceptor of the active site. His-163 serves as the catalytic Proton donor.

It belongs to the ribonuclease U2 family.

The protein resides in the secreted. Functionally, this purine-specific ribonuclease cleaves 28S RNA in eukaryotic ribosomes, inhibits protein synthesis, and shows antitumor activity. In Aspergillus fumigatus (strain ATCC MYA-4609 / CBS 101355 / FGSC A1100 / Af293) (Neosartorya fumigata), this protein is Ribonuclease mitogillin (mitF).